The sequence spans 100 residues: Apolipoprotein C-II (100 aa).

The signal sequence occupies residues 1-22 (MGTRFLLALFLVLLVLGFEVQG). A lipid binding region spans residues 66 to 74 (TVDEKLRDM). The tract at residues 78-100 (STAAVSTYAGIFTDQLLTLLKGD) is lipoprotein lipase cofactor.

This sequence belongs to the apolipoprotein C2 family. In terms of processing, proapolipoprotein C-II is synthesized as a sialic acid containing glycoprotein which is subsequently desialylated prior to its proteolytic processing. Post-translationally, proapolipoprotein C-II, the major form found in plasma undergoes proteolytic cleavage of its N-terminal hexapeptide to generate apolipoprotein C-II, which occurs as the minor form in plasma.

The protein localises to the secreted. In terms of biological role, component of chylomicrons, very low-density lipoproteins (VLDL), low-density lipoproteins (LDL), and high-density lipoproteins (HDL) in plasma. Plays an important role in lipoprotein metabolism as an activator of lipoprotein lipase. Both proapolipoprotein C-II and apolipoprotein C-II can activate lipoprotein lipase. This chain is Apolipoprotein C-II (APOC2), found in Otolemur garnettii (Small-eared galago).